The sequence spans 555 residues: Formate--tetrahydrofolate ligase (555 aa).

Position 65–72 (65–72 (TPAGEGKS)) interacts with ATP.

Belongs to the formate--tetrahydrofolate ligase family.

The enzyme catalyses (6S)-5,6,7,8-tetrahydrofolate + formate + ATP = (6R)-10-formyltetrahydrofolate + ADP + phosphate. It participates in one-carbon metabolism; tetrahydrofolate interconversion. The protein is Formate--tetrahydrofolate ligase of Staphylococcus epidermidis (strain ATCC 35984 / DSM 28319 / BCRC 17069 / CCUG 31568 / BM 3577 / RP62A).